Here is a 684-residue protein sequence, read N- to C-terminus: Early phosphoprotein p84 (684 aa).

Disordered stretches follow at residues 166–301 (LGGS…MSLP), 317–336 (SSAV…HHNA), 357–393 (VVSS…AAAT), 407–452 (RAPA…SPRF), and 569–657 (SNSS…GPSF). A compositionally biased stretch (basic and acidic residues) spans 180–191 (EQQRRRQEQRHE). Over residues 201 to 220 (AGGGGGGGASGGGGGGGSGG) the composition is skewed to gly residues. 2 stretches are compositionally biased toward basic and acidic residues: residues 232–245 (RDPR…ERRP) and 258–272 (REAK…HEGH). The Nuclear localization signal motif lies at 261 to 264 (KRQK). The segment covering 285–296 (GGAGGGGGGGSG) has biased composition (gly residues). Residues 326–335 (NHHHHHHHHN) show a composition bias toward basic residues. Residues 359–377 (SSPSSTSPSSLLSLPRPSS) are compositionally biased toward low complexity. Over residues 425-442 (STTPVSNCRVPPNSQESA) the composition is skewed to polar residues. Pro residues predominate over residues 578 to 587 (PLPPPPPPPG). Over residues 598–608 (RGGGGGGGGGR) the composition is skewed to gly residues. The span at 612 to 622 (RQAASSSSSSS) shows a compositional bias: low complexity.

Belongs to the herpesviridae U79/UL112 family. Isoforms 1, 2, 3 and 4 interacts with themselves and with each other via their shared N-terminal regions; these interactions are important to both their intranuclear targeting and the recruitment of UL44 to subnuclear sites for viral replication.

Its subcellular location is the host nucleus. The protein localises to the virion. Functionally, needed for efficient replication. Recruits the DNA polymerase processivity factor to pre-replication foci. In Homo sapiens (Human), this protein is Early phosphoprotein p84 (UL112/UL113).